A 282-amino-acid chain; its full sequence is uncharacterized protein (282 aa).

The protein belongs to the ycf80 family.

The protein localises to the plastid. Its subcellular location is the chloroplast. This is an uncharacterized protein from Guillardia theta (Cryptophyte).